Reading from the N-terminus, the 487-residue chain is Recombining binding protein suppressor of hairless (487 aa).

2 DNA-binding regions span residues Gln44–Phe54 and Ser152–Lys157. The residue at position 162 (Lys162) is an N6-acetyllysine. The interval Arg179 to Thr184 is DNA-binding. The region spanning Pro342 to Thr432 is the IPT/TIG domain. A compositionally biased stretch (polar residues) spans Ser452–Tyr468. Positions Ser452–Ser487 are disordered. Positions Thr469 to Ser487 are enriched in low complexity.

It belongs to the Su(H) family. As to quaternary structure, interacts with activated NOTCH1, NOTCH2 or NOTCH3. Interacts with MINT/SHARP. This interaction may mediate the recruitment of large corepressor complexes containing proteins such as HDAC1, HDAC2, NCOR2, SAP30, FHL1/KYOT2 and CIR1. Interacts with EP300, MAML1 and PTF1A. Interacts with RITA1, leading to nuclear export, prevent the interaction between RBPJ and NICD product and subsequent down-regulation of the Notch signaling pathway. Interacts with SNW1. Interacts with CHCHD2 and CXXC5. Interacts with BEND6 (via BEN domain). Interacts with NKAPL. Interacts with ZMIZ1. Interacts with RBM15. Interacts with L3MBTL3 and KDM1A; the interaction with KDM1A is weaker in the absence of L3MBTL3 and the interaction with L3MBTL3 is impaired by Notch-derived peptides containing the intracellular domain (NICD).

The protein resides in the nucleus. It is found in the cytoplasm. Transcriptional regulator that plays a central role in Notch signaling, a signaling pathway involved in cell-cell communication that regulates a broad spectrum of cell-fate determinations. Acts as a transcriptional repressor when it is not associated with Notch proteins. When associated with some NICD product of Notch proteins (Notch intracellular domain), it acts as a transcriptional activator that activates transcription of Notch target genes. Probably represses or activates transcription via the recruitment of chromatin remodeling complexes containing histone deacetylase or histone acetylase proteins, respectively. Specifically binds to the immunoglobulin kappa-type J segment recombination signal sequence. Binds specifically to methylated DNA. Binds to the oxygen responsive element of COX4I2 and activates its transcription under hypoxia conditions (4% oxygen). Negatively regulates the phagocyte oxidative burst in response to bacterial infection by repressing transcription of NADPH oxidase subunits. This chain is Recombining binding protein suppressor of hairless (RBPJ), found in Bos taurus (Bovine).